We begin with the raw amino-acid sequence, 215 residues long: 3-demethoxyubiquinol 3-hydroxylase (215 aa).

Fe cation contacts are provided by glutamate 64, glutamate 94, histidine 97, glutamate 146, glutamate 178, and histidine 181.

The protein belongs to the COQ7 family. Fe cation is required as a cofactor.

It is found in the cell membrane. The catalysed reaction is a 5-methoxy-2-methyl-3-(all-trans-polyprenyl)benzene-1,4-diol + AH2 + O2 = a 3-demethylubiquinol + A + H2O. Its pathway is cofactor biosynthesis; ubiquinone biosynthesis. Catalyzes the hydroxylation of 2-nonaprenyl-3-methyl-6-methoxy-1,4-benzoquinol during ubiquinone biosynthesis. The chain is 3-demethoxyubiquinol 3-hydroxylase from Ectopseudomonas mendocina (strain ymp) (Pseudomonas mendocina).